The sequence spans 103 residues: UPF0102 protein aq_041 (103 aa).

Belongs to the UPF0102 family.

In Aquifex aeolicus (strain VF5), this protein is UPF0102 protein aq_041.